A 317-amino-acid polypeptide reads, in one-letter code: Acetyl-coenzyme A carboxylase carboxyl transferase subunit alpha (317 aa).

Positions 39 to 293 constitute a CoA carboxyltransferase C-terminal domain; sequence RLESKAAAAL…EEAIAEGLAG (255 aa).

Belongs to the AccA family. Acetyl-CoA carboxylase is a heterohexamer composed of biotin carboxyl carrier protein (AccB), biotin carboxylase (AccC) and two subunits each of ACCase subunit alpha (AccA) and ACCase subunit beta (AccD).

Its subcellular location is the cytoplasm. The catalysed reaction is N(6)-carboxybiotinyl-L-lysyl-[protein] + acetyl-CoA = N(6)-biotinyl-L-lysyl-[protein] + malonyl-CoA. The protein operates within lipid metabolism; malonyl-CoA biosynthesis; malonyl-CoA from acetyl-CoA: step 1/1. Functionally, component of the acetyl coenzyme A carboxylase (ACC) complex. First, biotin carboxylase catalyzes the carboxylation of biotin on its carrier protein (BCCP) and then the CO(2) group is transferred by the carboxyltransferase to acetyl-CoA to form malonyl-CoA. This is Acetyl-coenzyme A carboxylase carboxyl transferase subunit alpha from Methylobacterium sp. (strain 4-46).